We begin with the raw amino-acid sequence, 1282 residues long: MAISKKAGAKKAGAVSKPPPSKGASSKGGVAKADWREGFKKAQAGVSDMTLLSKVTNEAINDNLQKRFQNAEIYTYIGNVLISVNPFRDLGIYTEDILQSYRGKNRLEMTPHVFAIAEGAYYNMNAYKENQCVIISGESGAGKTEAAKRIMQYIAAVSGGSNSGIQDVKDMVLATNPLLESFGCAKTLRNNNSSRHGKYLEIMFNAHGEPIGANITNYLLEKNRVVQQIHDERNFHIFYQFTKAATATHRENYGIQGPEAYAYTANSQCLDVNGIDDHADFRETISAMNTIGLTADEQDNIFRMIAAILWIGNVQYVENQEGNAEISDPGVPDFVAYLLEVDAGNVTKALTQRIMETQRGGRRGSVYEVPLNPTQAAAARDALAKAIYNNMFDWIVERINQSMNPRTQSSNVIGVLDIYGFEIFDNNSFEQLCINYVNEKLQQIFIELTLKKEQEEYAYEQIQWTPIKYFNNKIVCDLIEEKRPPGIFSALNDACATAHADPTAADNSFIQRTGMLSSNPHFDSRGTKFLIKHYAGDVMYNVQGMTDKNKDSLLKDILDLVDSSTNSYLQKLFPDRPDPNSKKRPPTAGDRIKASANALVENLMRAQPSYIRTIKPNQNKSPTEYDSQAILHQIKYLGLQENIRVRRAGFAYRNTFEKMVERFYLLSPNTSYAGEYTWQGDARSGCERILTDTGIAREEWQMGVTKAFIKNPETLFALETMRDRYWHNMAMRIQRAYRNYLRYKEECARRIQRMWKNNKEGLQYIQLRDYGHQVLAGRKERRRFSLLGLRRFMGDYLDVGGANGKGGGSAEGQMLRQATGMAAGEAVAFSSRAQLLVSRLGRSSVRSPRFLILTDKAVYILVTQLVNKQVSTTCERRINLGAISAVGLSNLRDDWLVLNVNNAEEADPILHCYFKTELVTHLLQRTNGAINVIVSNSLEYSKKKGKKAQITFRKDETVQKDDVYKSSAVSVCSGEPANSVSRPAPKKKPGLVRPITQGKLLRAGGPSNANNKPKPRAIPRSTPTPAKLPGSGAAGTARPAAAVGSASAGAGVGATRSAPRPPPPPPAAVAPSEPQVARYKALYVFATENAGEMALDKDDVVEVTQKDETGSGWWLVKKNGVEGWAPSNYLELIVQAAPKPKAAPAPPVKRAAPVAPSATTASQRPAVAAKPAFGGAAAGVVQPKPVVKTTPAGGKPHERAAAVQADAAAAPVSVMPGLGAPGGFAAVLAKKKAENAAAAAAAGAGANGKGAGAPPAVAAKPVVAPKPAGSNGRAMPPPPPRR.

A disordered region spans residues M1–V30. The region spanning A44 to D723 is the Myosin motor domain. G137 to T144 is an ATP binding site. Position 365 is a phosphoserine (S365). Positions V412 to A494 are actin-binding. A disordered region spans residues L569 to D590. IQ domains are found at residues H727–C747 and A748–Q773. One can recognise a TH1 domain in the interval R781–A977. Residues S973–E1073 are disordered. Residues P1029–A1058 show a composition bias toward low complexity. Residues P1059–A1068 are compositionally biased toward pro residues. Positions P1074–Q1135 constitute an SH3 domain. The disordered stretch occupies residues A1237 to R1282. A compositionally biased stretch (low complexity) spans G1252–G1269.

It belongs to the TRAFAC class myosin-kinesin ATPase superfamily. Myosin family. In terms of processing, phosphorylation of the TEDS site (Ser-365) is required for the polarization of the actin cytoskeleton. Phosphorylation probably activates the myosin-I ATPase activity.

The protein localises to the cytoplasm. The protein resides in the cytoskeleton. Its subcellular location is the actin patch. Type-I myosin implicated in the organization of the actin cytoskeleton. Required for proper actin cytoskeleton polarization. At the cell cortex, assembles in patch-like structures together with proteins from the actin-polymerizing machinery and promotes actin assembly. Functions as actin nucleation-promoting factor (NPF) for the Arp2/3 complex. The polypeptide is Myosin-1 (myo1) (Mycosarcoma maydis (Corn smut fungus)).